Consider the following 146-residue polypeptide: Small ribosomal subunit protein uS9z (146 aa).

Belongs to the universal ribosomal protein uS9 family.

This Arabidopsis thaliana (Mouse-ear cress) protein is Small ribosomal subunit protein uS9z (RPS16A).